The chain runs to 1048 residues: Pleckstrin homology domain-containing family A member 6 (1048 aa).

Over residues 1–22 the composition is skewed to polar residues; that stretch reads MSNKTGGKRPATTNSDIPNHNM. Residues 1–36 are disordered; the sequence is MSNKTGGKRPATTNSDIPNHNMVSEVPPERPSVRAT. A PH domain is found at 59–158; the sequence is PVTKAGWLFK…WIQAMGEAAR (100 aa). Disordered stretches follow at residues 165–318 and 448–467; these read QKSV…MNQL and SLQP…SYSR. Over residues 201-233 the composition is skewed to basic and acidic residues; sequence PEPEAKTRGEGDGRGCEKAERRPERPEVKKEPP. Phosphoserine is present on residues Ser247 and Ser251. The segment covering 267–290 has biased composition (polar residues); it reads AQPNGWQYHSPSRPGSTAFPSQDG. 4 positions are modified to phosphoserine: Ser314, Ser459, Ser461, and Ser472. Residues 456–465 show a composition bias toward polar residues; the sequence is VPRSPSQGSY. Phosphotyrosine is present on Tyr492. Ser591 carries the phosphoserine modification. Residues 663 to 746 are disordered; sequence RKNNPSRGTD…HQTLPLDTPR (84 aa). The span at 687 to 711 shows a compositional bias: low complexity; the sequence is SSNSPASPLSSASLTSPLSPFSLVS. The span at 712–721 shows a compositional bias: polar residues; it reads GSQGSPTKPG. A Phosphothreonine modification is found at Thr744. Ser777 is subject to Phosphoserine. Thr784 bears the Phosphothreonine mark. Residues 793–858 are disordered; sequence ASGLTNGLSS…PAPDPSPRPA (66 aa). A compositionally biased stretch (polar residues) spans 794 to 803; sequence SGLTNGLSSQ. At Ser801 the chain carries Phosphoserine. Residues 815-827 show a composition bias toward basic and acidic residues; sequence GKVKMSVEEQIDR. Residues 828 to 842 are compositionally biased toward basic residues; it reads MRRHQSGSMREKRRS. Phosphoserine occurs at positions 848, 854, and 867. At Thr920 the chain carries Phosphothreonine. Ser940 is subject to Phosphoserine. 2 disordered regions span residues 968–989 and 1005–1048; these read PIGE…QEQE and RGRM…TMRV. A Phosphothreonine modification is found at Thr1015. A compositionally biased stretch (pro residues) spans 1016–1030; the sequence is PSPPTSPASPAPPAN. Ser1017 is subject to Phosphoserine. Thr1020 bears the Phosphothreonine mark. Phosphoserine occurs at positions 1021 and 1024.

In terms of tissue distribution, highly expressed in heart, kidney and throughout the brain.

The chain is Pleckstrin homology domain-containing family A member 6 (PLEKHA6) from Homo sapiens (Human).